The chain runs to 176 residues: Peptide deformylase (176 aa).

Cys-94 and His-136 together coordinate Fe cation. Glu-137 is a catalytic residue. Residue His-140 coordinates Fe cation.

The protein belongs to the polypeptide deformylase family. Fe(2+) is required as a cofactor.

The enzyme catalyses N-terminal N-formyl-L-methionyl-[peptide] + H2O = N-terminal L-methionyl-[peptide] + formate. In terms of biological role, removes the formyl group from the N-terminal Met of newly synthesized proteins. Requires at least a dipeptide for an efficient rate of reaction. N-terminal L-methionine is a prerequisite for activity but the enzyme has broad specificity at other positions. This Mesorhizobium japonicum (strain LMG 29417 / CECT 9101 / MAFF 303099) (Mesorhizobium loti (strain MAFF 303099)) protein is Peptide deformylase.